We begin with the raw amino-acid sequence, 282 residues long: 4-diphosphocytidyl-2-C-methyl-D-erythritol kinase (282 aa).

The active site involves Lys12. Pro95–Ser105 lines the ATP pocket. Residue Asp137 is part of the active site.

It belongs to the GHMP kinase family. IspE subfamily.

It carries out the reaction 4-CDP-2-C-methyl-D-erythritol + ATP = 4-CDP-2-C-methyl-D-erythritol 2-phosphate + ADP + H(+). It functions in the pathway isoprenoid biosynthesis; isopentenyl diphosphate biosynthesis via DXP pathway; isopentenyl diphosphate from 1-deoxy-D-xylulose 5-phosphate: step 3/6. Functionally, catalyzes the phosphorylation of the position 2 hydroxy group of 4-diphosphocytidyl-2C-methyl-D-erythritol. This is 4-diphosphocytidyl-2-C-methyl-D-erythritol kinase from Pseudomonas aeruginosa (strain UCBPP-PA14).